We begin with the raw amino-acid sequence, 466 residues long: 3-isopropylmalate dehydratase large subunit (466 aa).

3 residues coordinate [4Fe-4S] cluster: Cys-347, Cys-407, and Cys-410.

The protein belongs to the aconitase/IPM isomerase family. LeuC type 1 subfamily. Heterodimer of LeuC and LeuD. [4Fe-4S] cluster is required as a cofactor.

The catalysed reaction is (2R,3S)-3-isopropylmalate = (2S)-2-isopropylmalate. It participates in amino-acid biosynthesis; L-leucine biosynthesis; L-leucine from 3-methyl-2-oxobutanoate: step 2/4. Catalyzes the isomerization between 2-isopropylmalate and 3-isopropylmalate, via the formation of 2-isopropylmaleate. The sequence is that of 3-isopropylmalate dehydratase large subunit from Escherichia coli O45:K1 (strain S88 / ExPEC).